A 27-amino-acid chain; its full sequence is DELTA-pseudomyrmecitoxin-Pp1a subunit A (27 aa).

Heterodimer composed of subunit A and subunit B (DELTA-PSDTX-Pp1a); disulfide-linked. In terms of tissue distribution, expressed by the venom gland.

It is found in the secreted. In terms of biological role, this heterodimer has insecticidal and cytotoxic properties. Induces immediate paralysis when injected into blowflies (Lucilia cuprina), and then death within 24 hours. Also inhibits the growth of Aedes albopictus mosquito C6/36 cells. The sequence is that of DELTA-pseudomyrmecitoxin-Pp1a subunit A from Pseudomyrmex penetrator (Ant).